The primary structure comprises 242 residues: Anamorsin homolog (242 aa).

Residues 1 to 140 form an N-terminal SAM-like domain region; sequence MMNFADTLVI…NVTAENPDFL (140 aa). The linker stretch occupies residues 141–162; sequence SNEDDDEGNSSDGEAYQNAEDN. 4 residues coordinate [4Fe-4S] cluster: cysteine 205, cysteine 208, cysteine 216, and cysteine 219. 2 consecutive short sequence motifs (cx2C motif) follow at residues 205 to 208 and 216 to 219; these read CGNC and CASC. Residues 205–219 are fe-S binding site B; sequence CGNCYLGDAFRCASC.

It belongs to the anamorsin family. Monomer. Requires [4Fe-4S] cluster as cofactor.

It is found in the cytoplasm. The protein resides in the mitochondrion intermembrane space. Its function is as follows. Component of the cytosolic iron-sulfur (Fe-S) protein assembly (CIA) machinery. Required for the maturation of extramitochondrial Fe-S proteins. Part of an electron transfer chain functioning in an early step of cytosolic Fe-S biogenesis, facilitating the de novo assembly of a [4Fe-4S] cluster on the cytosolic Fe-S scaffold complex. Electrons are transferred from NADPH via a FAD- and FMN-containing diflavin oxidoreductase. Together with the diflavin oxidoreductase, also required for the assembly of the diferric tyrosyl radical cofactor of ribonucleotide reductase (RNR), probably by providing electrons for reduction during radical cofactor maturation in the catalytic small subunit. This is Anamorsin homolog from Plasmodium knowlesi (strain H).